The sequence spans 87 residues: HssA/B-like protein 28 (87 aa).

Belongs to the hssA/B family.

The polypeptide is HssA/B-like protein 28 (hssl28) (Dictyostelium discoideum (Social amoeba)).